Here is a 566-residue protein sequence, read N- to C-terminus: DBIRD complex subunit ZNF326 (566 aa).

Disordered regions lie at residues 19–81 (HCGV…ESYD) and 145–180 (RPGF…GRGT). Residues 59 to 73 (SHGGGGGGGGGGGNR) show a composition bias toward gly residues. Over residues 156–165 (SYSSYSSFSS) the composition is skewed to low complexity. Residues 240 to 263 (KRKMMPQPYNKPGGTFIKKPKMTK) carry the Bipartite nuclear localization signal motif. Residues 314-347 (FGDSKGEGKSEEEEKRRIEARREKQRRRREKNSE) are disordered. The span at 317–335 (SKGEGKSEEEEKRRIEARR) shows a compositional bias: basic and acidic residues. 2 consecutive C2H2 AKAP95-type zinc fingers follow at residues 359–381 (CSFC…SAAH) and 452–475 (CSAC…SPDH). The segment at 516–566 (PFEINDQAQEQQTEEEDKAEEPAEGEEEEEEEEEEETEEQTDFTLDHTEDN) is disordered. Acidic residues predominate over residues 527–556 (QTEEEDKAEEPAEGEEEEEEEEEEETEEQT).

It belongs to the AKAP95 family. In terms of assembly, component of the DBIRD complex.

Its subcellular location is the nucleus. Functionally, core component of the DBIRD complex, a multiprotein complex that acts at the interface between core mRNP particles and RNA polymerase II (RNAPII) and integrates transcript elongation with the regulation of alternative splicing. In Gallus gallus (Chicken), this protein is DBIRD complex subunit ZNF326 (ZNF326).